We begin with the raw amino-acid sequence, 370 residues long: Mesoderm posterior protein 2 (370 aa).

3 disordered regions span residues 51–89, 231–265, and 325–350; these read PSQP…EREK, SLER…HWTQ, and TSED…GLQL. Over residues 57 to 77 the composition is skewed to low complexity; it reads PARSTRTTQATAPRRTRPAPA. One can recognise a bHLH domain in the interval 79–133; it reads GQRQSASEREKLRMRTLARALQELRRFLPPSVAPAGQSLTKIETLRLAIRYIGHL. Residues 325 to 334 show a composition bias toward polar residues; sequence TSEDQGSSPA. The interval 326 to 330 is may contain a degradation domain; sequence SEDQG.

Post-translationally, degraded by the proteasome. In terms of processing, phosphorylated.

The protein resides in the nucleus. Its function is as follows. Transcription factor with important role in somitogenesis. Defines the rostrocaudal patterning of the somite by participating in distinct Notch pathways. Also regulates the FGF signaling pathway. Specifies the rostral half of the somites. Generates rostro-caudal polarity of somites by down-regulating in the presumptive rostral domain DLL1, a Notch ligand. Participates in the segment border formation by activating in the anterior presomitic mesoderm LFNG, a negative regulator of DLL1-Notch signaling. Acts as a strong suppressor of Notch activity. Together with MESP1 is involved in the epithelialization of somitic mesoderm and in the development of cardiac mesoderm. May play a role with Tcf15 in the differentiation of myotomal and sclerotomal cells by regulating Pax family genes. Also controls the expression of the protocadherin PCDH8/PAPC, EPHA4, RIPPLY2, NOTCH2, FGFR1, and CER1. Binds to the E-boxes within the EPH4A and RIPPLY2 enhancers. The chain is Mesoderm posterior protein 2 (Mesp2) from Mus musculus (Mouse).